The primary structure comprises 247 residues: ATP synthase subunit a, chloroplastic (247 aa).

Helical transmembrane passes span 38–58 (QVLI…IVTV), 95–115 (VPFI…GALL), 134–154 (INTT…AGLS), 199–219 (LVVV…VMFL), and 220–240 (GLFT…AYIG).

The protein belongs to the ATPase A chain family. As to quaternary structure, F-type ATPases have 2 components, CF(1) - the catalytic core - and CF(0) - the membrane proton channel. CF(1) has five subunits: alpha(3), beta(3), gamma(1), delta(1), epsilon(1). CF(0) has four main subunits: a, b, b' and c.

The protein resides in the plastid. It is found in the chloroplast thylakoid membrane. Key component of the proton channel; it plays a direct role in the translocation of protons across the membrane. The polypeptide is ATP synthase subunit a, chloroplastic (Populus trichocarpa (Western balsam poplar)).